Consider the following 62-residue polypeptide: U10-buthitoxin-Hj1a (62 aa).

A signal peptide spans 1–22; sequence MQKIFIILVLFCILKFNVDVEG. 3 cysteine pairs are disulfide-bonded: C28–C46, C33–C59, and C37–C61.

This sequence belongs to the short scorpion toxin superfamily. Potassium channel inhibitor family. Alpha-KTx 23 subfamily. As to expression, expressed by the venom gland.

The protein resides in the secreted. Functionally, may block potassium channels. This Hottentotta judaicus (Black scorpion) protein is U10-buthitoxin-Hj1a.